The chain runs to 122 residues: Ig heavy chain V region M603 (122 aa).

Residues 1–121 enclose the Ig-like domain; it reads EVKLVESGGG…WGAGTTVTVS (121 aa).

This Mus musculus (Mouse) protein is Ig heavy chain V region M603.